The following is a 260-amino-acid chain: Neuraminyllactose-binding hemagglutinin (260 aa).

Positions 1 to 27 are cleaved as a signal peptide; it reads MRANNHFKDFAWKKCLLGASVVALLVG. Cys28 carries N-palmitoyl cysteine lipidation. Cys28 carries S-diacylglycerol cysteine lipidation. The segment at 134-139 is N-acetyl-neuraminyl-alpha(2,3)-lactose binding motif; that stretch reads KRTIQK.

It is found in the cell outer membrane. This chain is Neuraminyllactose-binding hemagglutinin (hpaA), found in Helicobacter pylori (Campylobacter pylori).